Here is a 57-residue protein sequence, read N- to C-terminus: Large ribosomal subunit protein uL30 (57 aa).

Belongs to the universal ribosomal protein uL30 family. As to quaternary structure, part of the 50S ribosomal subunit.

This is Large ribosomal subunit protein uL30 from Clostridium perfringens (strain ATCC 13124 / DSM 756 / JCM 1290 / NCIMB 6125 / NCTC 8237 / Type A).